Here is a 127-residue protein sequence, read N- to C-terminus: Fluoride-specific ion channel FluC 1 (127 aa).

Transmembrane regions (helical) follow at residues 3 to 23 (LLIV…VGQW), 35 to 55 (IAML…FGLY), 74 to 94 (IGFF…VLLI), and 102 to 122 (LFSY…LGFY). Residues Gly-78 and Thr-81 each coordinate Na(+).

It belongs to the fluoride channel Fluc/FEX (TC 1.A.43) family.

The protein resides in the cell membrane. It catalyses the reaction fluoride(in) = fluoride(out). Its activity is regulated as follows. Na(+) is not transported, but it plays an essential structural role and its presence is essential for fluoride channel function. Its function is as follows. Fluoride-specific ion channel. Important for reducing fluoride concentration in the cell, thus reducing its toxicity. The sequence is that of Fluoride-specific ion channel FluC 1 from Halalkalibacterium halodurans (strain ATCC BAA-125 / DSM 18197 / FERM 7344 / JCM 9153 / C-125) (Bacillus halodurans).